The primary structure comprises 742 residues: F-box only protein 30 (742 aa).

The segment at 49-108 (EHRLLCPFERVPCLNSNFGCPFTLARNKVAEHLEMCPASVVCCTMEWNRWPVSYSDRKSY) adopts a TRAF-type zinc-finger fold. The segment at 214 to 242 (SLQGTTNEMDEESNRESSQDRNAKDQDHL) is disordered. The span at 225-242 (ESNRESSQDRNAKDQDHL) shows a compositional bias: basic and acidic residues. Residue serine 379 is modified to Phosphoserine. The region spanning 607-653 (SDHLSSLPFEVLQHIAGFLDGFSLCQLACVSRLMRDICGSLLQSRGM) is the F-box domain.

As to quaternary structure, part of a SCF (SKP1-cullin-F-box) protein ligase complex. Interacts with SKP1, CUL1 and RBX1/ROC1. In terms of processing, auto-ubiquitinated. Post-translationally, may be neddylated. Neddylation may be required for E3 ligase activity.

The protein operates within protein modification; protein ubiquitination. Functionally, substrate-recognition component of the SCF (SKP1-CUL1-F-box protein)-type E3 ubiquitin ligase complex. Required for muscle atrophy following denervation. The chain is F-box only protein 30 (Fbxo30) from Rattus norvegicus (Rat).